We begin with the raw amino-acid sequence, 508 residues long: ATP synthase subunit alpha (508 aa).

ATP is bound at residue G171–T178.

This sequence belongs to the ATPase alpha/beta chains family. In terms of assembly, F-type ATPases have 2 components, CF(1) - the catalytic core - and CF(0) - the membrane proton channel. CF(1) has five subunits: alpha(3), beta(3), gamma(1), delta(1), epsilon(1). CF(0) has three main subunits: a(1), b(2) and c(9-12). The alpha and beta chains form an alternating ring which encloses part of the gamma chain. CF(1) is attached to CF(0) by a central stalk formed by the gamma and epsilon chains, while a peripheral stalk is formed by the delta and b chains.

The protein localises to the cell membrane. It catalyses the reaction ATP + H2O + 4 H(+)(in) = ADP + phosphate + 5 H(+)(out). In terms of biological role, produces ATP from ADP in the presence of a proton gradient across the membrane. The alpha chain is a regulatory subunit. The chain is ATP synthase subunit alpha from Protochlamydia amoebophila (strain UWE25).